A 356-amino-acid polypeptide reads, in one-letter code: Probable L-asparaginase 4 (356 aa).

A signal peptide spans 1-22 (MWGFIVTCGIFLVLLCQLRLLS). The region spanning 36–356 (PNVTVFAMGG…RDIEGLFSIK (321 aa)) is the Asparaginase/glutaminase domain. N-linked (GlcNAc...) asparagine glycosylation is present at asparagine 37. Residue threonine 46 is the O-isoaspartyl threonine intermediate of the active site. N-linked (GlcNAc...) asparagine glycosylation occurs at asparagine 52. Substrate-binding positions include serine 93 and 126–127 (TD). Asparagine 176 is a glycosylation site (N-linked (GlcNAc...) asparagine).

This sequence belongs to the asparaginase 1 family.

Its subcellular location is the secreted. It is found in the cell wall. The catalysed reaction is L-asparagine + H2O = L-aspartate + NH4(+). This is Probable L-asparaginase 4 from Schizosaccharomyces pombe (strain 972 / ATCC 24843) (Fission yeast).